The chain runs to 310 residues: MSSVTQPLAVPRPGVASLLRDYSELTKARVTTLIVMTAWTGAFFGAAKSGLPLVSWTLFHALLGIGLVSGGTAAMNEVIERESDARMRRTAIRPLVTGSMSLGHGMVVSLVMMIGGAGYLGLMTNWLTAALALMTSVVYLMAYTPLKKIHPICTTIGAFPGAMPPVLGWTAIRGHLGWEAVALFAILFFWQFPHFHSIAWLYRDDYANAGIRMLPVVERDGRSTAREIVIYAAFLLPITLTPFLLRFAGRIYFLAALVLGSMLFWVSLRMFTMNLAPSSPHSKKYARQLLLASVTYLPLLFAVMMLDRTI.

The next 9 helical transmembrane spans lie at 30 to 47 (VTTLIVMTAWTGAFFGAA), 50 to 70 (GLPLVSWTLFHALLGIGLVSG), 102 to 122 (LGHGMVVSLVMMIGGAGYLGL), 126 to 146 (WLTAALALMTSVVYLMAYTPL), 152 to 172 (ICTTIGAFPGAMPPVLGWTAI), 181 to 201 (VALFAILFFWQFPHFHSIAWL), 228 to 248 (IVIYAAFLLPITLTPFLLRFA), 251 to 271 (IYFLAALVLGSMLFWVSLRMF), and 286 to 306 (ARQLLLASVTYLPLLFAVMML).

This sequence belongs to the UbiA prenyltransferase family. Protoheme IX farnesyltransferase subfamily.

The protein localises to the cell inner membrane. It carries out the reaction heme b + (2E,6E)-farnesyl diphosphate + H2O = Fe(II)-heme o + diphosphate. Its pathway is porphyrin-containing compound metabolism; heme O biosynthesis; heme O from protoheme: step 1/1. Functionally, converts heme B (protoheme IX) to heme O by substitution of the vinyl group on carbon 2 of heme B porphyrin ring with a hydroxyethyl farnesyl side group. The chain is Protoheme IX farnesyltransferase from Koribacter versatilis (strain Ellin345).